The chain runs to 260 residues: Uroplakin-1b (260 aa).

Residues 1–12 are Cytoplasmic-facing; the sequence is MAKDDSSVRCFQ. Residues 13–38 form a helical membrane-spanning segment; the sequence is GLLIFGNVIVGMCGIALTAECIFFVS. Residues 39 to 60 are Extracellular-facing; it reads DQHSLYPLLEATDNDDIYGAAW. The chain crosses the membrane as a helical span at residues 61–81; it reads IGMFVGICLFCLSVLGIVGIM. Residues 82–86 lie on the Cytoplasmic side of the membrane; it reads KSNRK. A helical transmembrane segment spans residues 87-107; it reads ILLAYFILMFIVYGFEVASCI. At 108-229 the chain is on the extracellular side; it reads TAATQRDFFT…ELISGPMNRH (122 aa). The helical transmembrane segment at 230-250 threads the bilayer; it reads AWGVAWFGFAILCWTFWVLLG. Residues 251–260 lie on the Cytoplasmic side of the membrane; it reads TMFYWSRIEY.

Belongs to the tetraspanin (TM4SF) family. In terms of assembly, heterodimer with uroplakin-3A (UPK3A) or uroplakin-3B (UPK3B).

It is found in the membrane. Component of the asymmetric unit membrane (AUM); a highly specialized biomembrane elaborated by terminally differentiated urothelial cells. In Neovison vison (American mink), this protein is Uroplakin-1b (UPK1B).